We begin with the raw amino-acid sequence, 486 residues long: Pentatricopeptide repeat-containing protein At2g01860 (486 aa).

Residues 111–137 (QKPDKPSRVRPLPLPQPHKLRPLGLPT) are disordered. PPR repeat units follow at residues 290–321 (DSSVYVKMILEIAKNPDKYHLVVALLEELKKR), 327–361 (SQQDCTSIMKICVKLGEFELVESLFDWFKASNREP), 362–396 (SVVMYTTMIHSRYSEQKYREAMSVVWEMEESNCLL), 397–431 (DLPAYRVVIKLFVALDDLGRAMRYYSKLKEAGFSP), and 432–466 (TYDIYRDMISVYTASGRLTKCKEICKEVEDAGLRL).

It belongs to the PPR family. P subfamily.

The polypeptide is Pentatricopeptide repeat-containing protein At2g01860 (EMB975) (Arabidopsis thaliana (Mouse-ear cress)).